Reading from the N-terminus, the 435-residue chain is Glucan 1,3-beta-glucosidase (435 aa).

The signal sequence occupies residues Met-1–Ala-30. The active-site Proton donor is Glu-222. 2 disulfide bridges follow: Cys-306-Cys-432 and Cys-331-Cys-357. Glu-323 functions as the Nucleophile in the catalytic mechanism.

Belongs to the glycosyl hydrolase 5 (cellulase A) family.

Its subcellular location is the secreted. The catalysed reaction is Successive hydrolysis of beta-D-glucose units from the non-reducing ends of (1-&gt;3)-beta-D-glucans, releasing alpha-glucose.. In terms of biological role, beta-glucanases participate in the metabolism of beta-glucan, the main structural component of the cell wall. It could also function biosynthetically as a transglycosylase. The protein is Glucan 1,3-beta-glucosidase of Pichia angusta (Yeast).